Consider the following 214-residue polypeptide: Protein DMP6 (214 aa).

4 helical membrane passes run 52 to 72 (LANLLPTGTVLAFQILSPICT), 83 to 103 (FMTALLVSICGFSCFILSFTD), 143 to 163 (FIDFVHAIMSFLVFGAVVLFD), and 178 to 198 (VVELLTTLPVAVGVFCSMVFA).

Belongs to the plant DMP1 protein family. In terms of tissue distribution, expressed constitutively in leaves, stems, flowers, siliques and roots (e.g. root hairs).

It is found in the vacuole membrane. Involved in membrane remodeling. The protein is Protein DMP6 of Arabidopsis thaliana (Mouse-ear cress).